A 247-amino-acid polypeptide reads, in one-letter code: Oil body-associated protein 2A (247 aa).

The segment at 1-26 (MASSDERPGAYPARDGSENLPPGDPK) is disordered.

Belongs to the OBAP family.

This Arabidopsis thaliana (Mouse-ear cress) protein is Oil body-associated protein 2A.